The chain runs to 406 residues: MKAVIFVVDGLGDRPDKNGNTPLKEAKTPVMDRMAKEGICGLMNSVDIGVRPGSDTAHLALLGYDPYTTYTGRGPFEACGVGVTVKPGDIAFRCNFSSVDENFIVTDRRAGRIENTSELEKELDGLKIDDVEIIFKESGGYRAALVLRGPGLSDKITDADPKKEGKKVKEIHPLDDSKEAKKTAEIVNKLLKIAYEKLDKHPVNEERRKQNLPVANMIVPRGVGQVPEIMQFTEKTGLKGACIAGTGLIKGIAKMVGLDVIDVEGCDGTPDSDFMAKACAIVETLENYDFILVNVKGADEAGHDGNYELKKQVIEKVDEMLDYITKNISKDEVYFVLSGDHSTPIEEMDHSADPLPVVLWGKSVRVDDVEKFDEFSTYKGGLNWIKGVHIMPILLDLMGLAKKYGA.

It belongs to the BPG-independent phosphoglycerate mutase family. A-PGAM subfamily.

It catalyses the reaction (2R)-2-phosphoglycerate = (2R)-3-phosphoglycerate. The protein operates within carbohydrate degradation; glycolysis; pyruvate from D-glyceraldehyde 3-phosphate: step 3/5. Catalyzes the interconversion of 2-phosphoglycerate and 3-phosphoglycerate. This is 2,3-bisphosphoglycerate-independent phosphoglycerate mutase from Methanococcus maripaludis (strain DSM 14266 / JCM 13030 / NBRC 101832 / S2 / LL).